Here is a 145-residue protein sequence, read N- to C-terminus: DnaJ homolog subfamily B member 3 (145 aa).

In terms of domain architecture, J spans 1–69; the sequence is MVDYYEVLDV…KKRDIYDRYG (69 aa).

Expressed in sperm (at protein level).

May operate as a co-chaperone of the male germ cell- and haploid stage-specific Hsp70 proteins. In Homo sapiens (Human), this protein is DnaJ homolog subfamily B member 3 (DNAJB3).